A 512-amino-acid chain; its full sequence is Glutathione-binding protein GsiB (512 aa).

A signal peptide spans 1 to 26 (MARAVHRSGLVALGIATALMASCAFA).

It belongs to the bacterial solute-binding protein 5 family. The complex is composed of two ATP-binding proteins (GsiA), two transmembrane proteins (GsiC and GsiD) and a solute-binding protein (GsiB).

It is found in the periplasm. Part of the ABC transporter complex GsiABCD involved in glutathione import. Binds glutathione. This chain is Glutathione-binding protein GsiB, found in Shigella boydii serotype 4 (strain Sb227).